Reading from the N-terminus, the 388-residue chain is Chorismate synthase (388 aa).

The NADP(+) site is built by arginine 39 and arginine 45. Residues 130–132, 251–252, glycine 296, 311–315, and arginine 337 contribute to the FMN site; these read RSS, NA, and KPIPT.

Belongs to the chorismate synthase family. As to quaternary structure, homotetramer. FMNH2 serves as cofactor.

It carries out the reaction 5-O-(1-carboxyvinyl)-3-phosphoshikimate = chorismate + phosphate. It functions in the pathway metabolic intermediate biosynthesis; chorismate biosynthesis; chorismate from D-erythrose 4-phosphate and phosphoenolpyruvate: step 7/7. Its function is as follows. Catalyzes the anti-1,4-elimination of the C-3 phosphate and the C-6 proR hydrogen from 5-enolpyruvylshikimate-3-phosphate (EPSP) to yield chorismate, which is the branch point compound that serves as the starting substrate for the three terminal pathways of aromatic amino acid biosynthesis. This reaction introduces a second double bond into the aromatic ring system. The protein is Chorismate synthase of Geobacillus thermodenitrificans (strain NG80-2).